A 175-amino-acid polypeptide reads, in one-letter code: MVLLHKSTHIFPTDFASVSRAFFNRYPNPYSPHVLSIDTISRNVDQEGNLRTTRLLKKSGKLPTWVKPFLRGITETWIIEVSVVNPANSTMKTYTRNLDHTGIMKVEEYTTYQFDSATSSTIADSRVKFSSGFNMGIKSKVEDWSRTKFDENVKKSRMGMAFVIQKLEEARNPQF.

Positions Met1–Glu80 are required for mitochondrial targeting. A PRELI/MSF1 domain is found at Val2–Asn172. Residues Tyr26, Lys58, Lys148, and Asn152 each contribute to the a 1,2-diacyl-sn-glycero-3-phosphate site.

The protein belongs to the slowmo family. In terms of assembly, interacts with MDM35. Found associated with a 170 kDa complex.

The protein resides in the mitochondrion inner membrane. Its subcellular location is the mitochondrion intermembrane space. Its function is as follows. Required for maintenance of normal mitochondrial morphology. Required for PCP1-dependent processing of MGM1. The UPS1:MDM35 complex mediates the transfer of phosphatidic acid (PA) between liposomes and probably functions as a PA transporter across the mitochondrion intermembrane space. Phosphatidic acid release requires dissociation of the UPS1:MDM35 complex. Phosphatidic acid import is required for cardiolipin (CL) synthesis in the mitochondrial inner membrane. With UPS2, controls the level of cardiolipin in mitochondria. Cardiolipin is a unique phospholipid with four fatty acid chains and is present mainly in the mitochondrial inner membrane where it stabilizes the electron transport chain supercomplex between complexes III and IV through direct interaction of their subunits. This Saccharomyces cerevisiae (strain ATCC 204508 / S288c) (Baker's yeast) protein is Protein UPS1, mitochondrial (UPS1).